The primary structure comprises 169 residues: MIGMNLQLVCLTLLAFSSWSLCSDSEEDVRALEADLLTNMHASKVSKGSPPSWKMTLLNVCSLINNLNSAAEEAGEMRDDDLVAKRKLPLVLDDFSLEALLTVFQLQKICRSRAFQHWEIIQEDILDHGNEKTEKEEVIKRKIPYILKRQLYENKPRRPYILKRASYYY.

Positions 1-22 are cleaved as a signal peptide; it reads MIGMNLQLVCLTLLAFSSWSLC.

Belongs to the neurotensin family. As to quaternary structure, interacts with NTSR1. Interacts with SORT1. Interacts with SORL1. In terms of processing, neurotensin is cleaved and degraded by Angiotensin-converting enzyme (ACE) and neprilysin (MME).

It localises to the secreted. It is found in the cytoplasmic vesicle. Its subcellular location is the secretory vesicle. Its function is as follows. Neurotensin may play an endocrine or paracrine role in the regulation of fat metabolism. It causes contraction of smooth muscle. In Rattus norvegicus (Rat), this protein is Neurotensin/neuromedin N (Nts).